The primary structure comprises 473 residues: Photosystem II CP43 reaction center protein (473 aa).

The propeptide occupies 1–14 (MKTLYSLRRSYPVE). Thr-15 carries the N-acetylthreonine modification. A Phosphothreonine modification is found at Thr-15. The next 5 membrane-spanning stretches (helical) occupy residues 69–93 (LFEV…PHLA), 134–155 (LIGP…KDRN), 178–200 (KALY…RKIT), 255–275 (KPFA…LSYS), and 291–312 (WFNN…ASQA). Glu-367 is a binding site for [CaMn4O5] cluster. A helical membrane pass occupies residues 447 to 471 (RARAAAAGFEKGIDRDFEPVLSMTP).

It belongs to the PsbB/PsbC family. PsbC subfamily. PSII is composed of 1 copy each of membrane proteins PsbA, PsbB, PsbC, PsbD, PsbE, PsbF, PsbH, PsbI, PsbJ, PsbK, PsbL, PsbM, PsbT, PsbX, PsbY, PsbZ, Psb30/Ycf12, at least 3 peripheral proteins of the oxygen-evolving complex and a large number of cofactors. It forms dimeric complexes. Binds multiple chlorophylls and provides some of the ligands for the Ca-4Mn-5O cluster of the oxygen-evolving complex. It may also provide a ligand for a Cl- that is required for oxygen evolution. PSII binds additional chlorophylls, carotenoids and specific lipids. is required as a cofactor.

The protein resides in the plastid. It localises to the chloroplast thylakoid membrane. In terms of biological role, one of the components of the core complex of photosystem II (PSII). It binds chlorophyll and helps catalyze the primary light-induced photochemical processes of PSII. PSII is a light-driven water:plastoquinone oxidoreductase, using light energy to abstract electrons from H(2)O, generating O(2) and a proton gradient subsequently used for ATP formation. The chain is Photosystem II CP43 reaction center protein from Pinus koraiensis (Korean pine).